We begin with the raw amino-acid sequence, 191 residues long: Cell division protein SepF (191 aa).

The segment covering 153–178 (FPEEVSPSNISSKKTSPYSLETNTTP) has biased composition (polar residues). Positions 153 to 191 (FPEEVSPSNISSKKTSPYSLETNTTPEPAWGESKLSAFS) are disordered.

Belongs to the SepF family. In terms of assembly, homodimer. Interacts with FtsZ.

The protein localises to the cytoplasm. In terms of biological role, cell division protein that is part of the divisome complex and is recruited early to the Z-ring. Probably stimulates Z-ring formation, perhaps through the cross-linking of FtsZ protofilaments. Its function overlaps with FtsA. The sequence is that of Cell division protein SepF from Prochlorococcus marinus (strain MIT 9515).